The following is a 255-amino-acid chain: 5'-nucleotidase SurE (255 aa).

Residues Asp-8, Asp-9, Ser-39, and Asn-95 each coordinate a divalent metal cation.

This sequence belongs to the SurE nucleotidase family. A divalent metal cation serves as cofactor.

The protein localises to the cytoplasm. It carries out the reaction a ribonucleoside 5'-phosphate + H2O = a ribonucleoside + phosphate. Functionally, nucleotidase that shows phosphatase activity on nucleoside 5'-monophosphates. The sequence is that of 5'-nucleotidase SurE from Herpetosiphon aurantiacus (strain ATCC 23779 / DSM 785 / 114-95).